The primary structure comprises 326 residues: Probable cell division protein WhiA (326 aa).

The H-T-H motif DNA-binding region spans 275-308 (SLEELGALADPPLTKDAIAGRIRRLLALADKRAR).

It belongs to the WhiA family.

In terms of biological role, involved in cell division and chromosome segregation. This chain is Probable cell division protein WhiA, found in Salinispora arenicola (strain CNS-205).